Reading from the N-terminus, the 694-residue chain is Lon-like protease BrxL (694 aa).

Belongs to the BrxL family.

BREX systems (bacteriophage exclusion) provide immunity against bacteriophage. Part of a type 1 BREX system which protects against dsDNA phage. This system allows phage adsorption but prevents phage DNA replication, without degradation of the phage DNA. Methylation of bacterial DNA by PglX guides self/non-self discrimination. When the brxA-brxB-brxC-pglX-pglZ-brxL genes are transformed into a susceptible E.coli strain (BW25113) they confer very high resistance to infection by bacteriophage VR7 and VpaE1, about 100-fold protection against lambda, T5 and T7 and no protection against RNA phage Qbeta, ssDNA phage M13 or dSDNA phage T4 and VR5. Glycosylated phage DNA is not susceptible to BREX. The BREX system does not confer resistance to lysogenic lambda phage, i.e. prophage that are integrated into the chromosomal DNA and then induced to form phage. Expression of this protein alone is toxic. The protein is Lon-like protease BrxL of Escherichia coli O9:H4 (strain HS).